Reading from the N-terminus, the 85-residue chain is uncharacterized protein (85 aa).

This is an uncharacterized protein from Bacillus subtilis (strain 168).